The following is a 571-amino-acid chain: Germacrene B synthase TPS16CC (571 aa).

5 residues coordinate (2E,6E)-farnesyl diphosphate: arginine 287, aspartate 324, aspartate 328, arginine 465, and aspartate 468. Aspartate 324 and aspartate 328 together coordinate Mg(2+). Positions 324–328 match the DDXXD motif motif; sequence DDIYD. The Mg(2+) site is built by aspartate 468, serine 472, and glutamate 476.

It belongs to the terpene synthase family. Tpsb subfamily. Mg(2+) is required as a cofactor. The cofactor is Mn(2+). In terms of tissue distribution, highly expressed in glandular trichomes.

It catalyses the reaction (2E,6E)-farnesyl diphosphate = (1E,4E)-germacrene B + diphosphate. It functions in the pathway secondary metabolite biosynthesis; terpenoid biosynthesis. Functionally, involved in sesquiterpene olefins biosynthesis, constituants of cannabinoids and terpenoids-rich resins. Catalyzes mainly the conversion of (2E)-farnesyl diphosphate to germacrene B, which is spontaneously converted to gamma-elemene as a thermal degradation product. This chain is Germacrene B synthase TPS16CC, found in Cannabis sativa (Hemp).